Consider the following 778-residue polypeptide: IQ domain-containing protein E (778 aa).

Disordered regions lie at residues 1–71 (MSLG…LSSR) and 83–108 (SSKQGSVAQPPSPTLTSEHAWTHPPS). Residues 37 to 49 (KPPSTSPKSPYYS) show a composition bias toward low complexity. Residues 83 to 101 (SSKQGSVAQPPSPTLTSEH) are compositionally biased toward polar residues. Positions 157–323 (LHMQKSDVDL…DLDRMLSNSP (167 aa)) form a coiled coil. The residue at position 322 (Ser322) is a Phosphoserine. Disordered stretches follow at residues 348–392 (KKVS…EDLP), 443–462 (ETAREGEKGRQEQEQALREE), 474–529 (EEAK…SEER), and 573–612 (LVRSKVPDSRSPSLPGLLSPLNQSSPAPRVLSPISPAEEN). The span at 352 to 362 (SSESPKQSTSE) shows a compositional bias: low complexity. The stretch at 398–486 (EEQEHLQGTV…KREEKNSFVA (89 aa)) forms a coiled coil. IQ domains are found at residues 553 to 582 (LDEAATVLQAAFRGHLARSKLVRSKVPDSR) and 615 to 644 (QEEAVIVIQSILRGYLAQARFIASCCREIA). Low complexity predominate over residues 581–598 (SRSPSLPGLLSPLNQSSP). Over residues 651–662 (TVSLTPSGSASP) the composition is skewed to polar residues. The interval 651–778 (TVSLTPSGSA…LPRKKSPSPF (128 aa)) is disordered. Ser661 carries the post-translational modification Phosphoserine. Basic and acidic residues predominate over residues 672 to 686 (IRKELCASEELRETS). Over residues 739-752 (PSPPELQPLSPPPV) the composition is skewed to pro residues.

In terms of assembly, component of the EvC complex composed of EFCAB7, IQCE, EVC2 and EVC; built from two subcomplexes, EVC2:EVC and EFCAB7:IQCE. Interacts (via N-terminus) with EFCAB7 (via EF-hands 1 and 2); this interaction anchors the EVC-EVC2 complex in a signaling microdomain at the base of cilia and stimulates the Hedgehog (Hh) pathway. Interacts with EVC2 (via N-terminal end). Interacts with EVC.

The protein localises to the cell projection. It is found in the cilium membrane. Functionally, component of the EvC complex that positively regulates ciliary Hedgehog (Hh) signaling. Required for proper limb morphogenesis. The sequence is that of IQ domain-containing protein E (Iqce) from Mus musculus (Mouse).